The sequence spans 572 residues: 2-isopropylmalate synthase (572 aa).

The Pyruvate carboxyltransferase domain occupies 31-305 (PIWMSTDLRD…DPGLDFSNIN (275 aa)). 4 residues coordinate Mg(2+): aspartate 40, histidine 244, histidine 246, and asparagine 280. Residues 437–572 (NTAPIHYVGH…MNDAAESVGV (136 aa)) form a regulatory domain region.

This sequence belongs to the alpha-IPM synthase/homocitrate synthase family. LeuA type 2 subfamily. Homodimer. Mg(2+) is required as a cofactor.

It localises to the cytoplasm. It catalyses the reaction 3-methyl-2-oxobutanoate + acetyl-CoA + H2O = (2S)-2-isopropylmalate + CoA + H(+). Its pathway is amino-acid biosynthesis; L-leucine biosynthesis; L-leucine from 3-methyl-2-oxobutanoate: step 1/4. Functionally, catalyzes the condensation of the acetyl group of acetyl-CoA with 3-methyl-2-oxobutanoate (2-ketoisovalerate) to form 3-carboxy-3-hydroxy-4-methylpentanoate (2-isopropylmalate). This is 2-isopropylmalate synthase from Paraburkholderia phytofirmans (strain DSM 17436 / LMG 22146 / PsJN) (Burkholderia phytofirmans).